The following is a 67-amino-acid chain: SPbeta prophage-derived uncharacterized protein YoqF (67 aa).

The polypeptide is SPbeta prophage-derived uncharacterized protein YoqF (yoqF) (Bacillus subtilis (strain 168)).